We begin with the raw amino-acid sequence, 97 residues long: Putative regulatory protein Dole_1911 (97 aa).

The protein belongs to the RemA family.

The protein is Putative regulatory protein Dole_1911 of Desulfosudis oleivorans (strain DSM 6200 / JCM 39069 / Hxd3) (Desulfococcus oleovorans).